Consider the following 977-residue polypeptide: Serine/threonine-protein kinase/endoribonuclease IRE1 (977 aa).

A signal peptide spans 1–20 (MPARWLLLLLALLLPPPGPG). Residues 21-445 (SFGRTSTVTL…EAPVDSMLKD (425 aa)) lie on the Lumenal side of the membrane. Residue Asn-178 is glycosylated (N-linked (GlcNAc...) asparagine). Residues 446–466 (MATIILSTFLLVGWVAFIITY) traverse the membrane as a helical segment. Topologically, residues 467–977 (PLSVHQQRQL…PQPPVIPYAL (511 aa)) are cytoplasmic. Residues 498 to 559 (FHPHGDLTQD…PSLEQDDEDE (62 aa)) form a disordered region. A compositionally biased stretch (low complexity) spans 513-551 (SSGPFSESSGTSSPSPSPRASNHSLHPSSSASRAGTSPS). Residues 571-832 (FCPKDVLGHG…AKHVLKHPFF (262 aa)) form the Protein kinase domain. ATP is bound by residues 577–585 (LGHGAEGTI), Lys-599, and 643–645 (ELC). Asp-688 functions as the Proton acceptor; for protein kinase activity in the catalytic mechanism. ATP-binding positions include 690–693 (KPHN) and Asp-711. Residues Ser-724 and Ser-729 each carry the phosphoserine modification. One can recognise a KEN domain in the interval 835–963 (LEKQLQFFQD…ERLFQTYYWH (129 aa)). Residues 906-907 (NK) are interacts with hydroxy-aryl-aldehyde inhibitors.

This sequence belongs to the protein kinase superfamily. Ser/Thr protein kinase family. As to quaternary structure, monomer. Homodimer; disulfide-linked; homodimerization takes place in response to endoplasmic reticulum stress and promotes activation of the kinase and endoribonuclease activities. Dimer formation is driven by hydrophobic interactions within the N-terminal luminal domains and stabilized by disulfide bridges. Interacts (via the luminal region) with DNAJB9/ERdj4; interaction takes place in unstressed cells and promotes recruitment of HSPA5/BiP. Interacts (via the luminal region) with HSPA5/BiP; HSPA5/BiP is a negative regulator of the unfolded protein response (UPR) that prevents homodimerization of ERN1/IRE1 and subsequent activation of the protein. Interaction with HSPA5 also competitively inhibits ERN1 interaction with MANF. Interacts with PDIA6, a negative regulator of the UPR; the interaction is direct and disrupts homodimerization. Interacts with DAB2IP (via PH domain); the interaction occurs in a endoplasmic reticulum stress-induced dependent manner and is required for subsequent recruitment of TRAF2 to ERN1/IRE1. Interacts with TAOK3 and TRAF2. Interacts with RNF13. Interacts with LACC1. Interacts (when unphosphorylated) with DDRGK1; interaction is dependent on UFM1 and takes place in response to endoplasmic reticulum stress, regulating ERN1/IRE1-alpha stability. Interacts (via N-terminus) with P4HB/PDIA1; the interaction is enhanced by phosphorylation of P4HB by FAM20C in response to endoplasmic reticulum stress and results in attenuation of ERN1 activity. Interacts with TMBIM6; this interaction inhibits ERN1 activity. Interacts (via luminal domain) with MANF (via C-terminus); the interaction is decreased in the presence of increasing concentrations of Ca(2+). Mg(2+) serves as cofactor. Autophosphorylated following homodimerization. Autophosphorylation promotes activation of the endoribonuclease domain. In response to ER stress, phosphorylated at Ser-724, Ser-729 and possibly Ser-726; phosphorylation promotes oligomerization and endoribonuclease activity. Dephosphorylated at Ser-724, Ser-729 and possibly Ser-726 by RPAP2 to abort failed ER-stress adaptation and trigger apoptosis. Phosphorylated at Ser-724; in response to the ER stressor tunicamycin. Post-translationally, ADP-ribosylated by PARP16 upon ER stress, which increases both kinase and endonuclease activities. In terms of tissue distribution, expressed in liver (at protein level). Ubiquitously expressed. High levels in thymus, liver and lung. In the brain, preferentially expressed in cortical, hippocampal and olfactory neurons.

It is found in the endoplasmic reticulum membrane. The enzyme catalyses L-seryl-[protein] + ATP = O-phospho-L-seryl-[protein] + ADP + H(+). The catalysed reaction is L-threonyl-[protein] + ATP = O-phospho-L-threonyl-[protein] + ADP + H(+). Its activity is regulated as follows. The kinase domain is activated by trans-autophosphorylation following homodimerization. Kinase activity is required for activation of the endoribonuclease domain. Endoribonuclease activity is specifically inhibited by hydroxy-aryl-aldehydes (HAA) MKC9989, OICR464 and OICR573. Serine/threonine-protein kinase and endoribonuclease that acts as a key sensor for the endoplasmic reticulum unfolded protein response (UPR). In unstressed cells, the endoplasmic reticulum luminal domain is maintained in its inactive monomeric state by binding to the endoplasmic reticulum chaperone HSPA5/BiP. Accumulation of misfolded protein in the endoplasmic reticulum causes release of HSPA5/BiP, allowing the luminal domain to homodimerize, promoting autophosphorylation of the kinase domain and subsequent activation of the endoribonuclease activity. The endoribonuclease activity is specific for XBP1 mRNA and excises 26 nucleotides from XBP1 mRNA. The resulting spliced transcript of XBP1 encodes a transcriptional activator protein that up-regulates expression of UPR target genes. Acts as an upstream signal for ER stress-induced GORASP2-mediated unconventional (ER/Golgi-independent) trafficking of CFTR to cell membrane by modulating the expression and localization of SEC16A. In Mus musculus (Mouse), this protein is Serine/threonine-protein kinase/endoribonuclease IRE1.